The sequence spans 374 residues: Spore germination protein GerLB (374 aa).

The next 10 membrane-spanning stretches (helical) occupy residues 16-36 (IGFA…PRDI), 44-64 (DGWI…WFVT), 86-106 (PVAY…TAYE), 122-142 (TPIQ…IAGS), 149-169 (LNVL…LLNI), 192-212 (VKNS…AVLL), 227-247 (AVMV…SVFT), 279-301 (FFTT…ASLL), 313-333 (IFIF…SSLN), and 341-361 (YLAW…LIVY).

It belongs to the amino acid-polyamine-organocation (APC) superfamily. Spore germination protein (SGP) (TC 2.A.3.9) family.

The protein localises to the membrane. Its function is as follows. Contributes to the L-alanine germination response. This is Spore germination protein GerLB (gerLB) from Bacillus cereus.